Consider the following 532-residue polypeptide: SET and MYND domain-containing protein DDB_G0288495 (532 aa).

The SET domain maps to 25–448; sequence PWIEVKSVSE…ENQELLITYI (424 aa). The MYND-type; degenerate zinc finger occupies 70–116; sequence CTTCFKILLESNRHNFQTCPSCFQVNYCSNYCKQYSKIETKHTELEC. The stretch at 199 to 240 forms a coiled coil; it reads INSKNNNEFENEEEEEEEQEQKGEGEQEENENNENNEKVKKK. The disordered stretch occupies residues 204-234; that stretch reads NNEFENEEEEEEEQEQKGEGEQEENENNENN. A compositionally biased stretch (acidic residues) spans 207-217; sequence FENEEEEEEEQ.

The protein belongs to the class V-like SAM-binding methyltransferase superfamily.

Functionally, probable methyltransferase. The polypeptide is SET and MYND domain-containing protein DDB_G0288495 (Dictyostelium discoideum (Social amoeba)).